A 465-amino-acid chain; its full sequence is Chromosomal replication initiator protein DnaA (465 aa).

Residues methionine 1–glutamate 87 form a domain I, interacts with DnaA modulators region. The interval serine 81–serine 123 is disordered. Residues glutamine 88 to proline 100 show a composition bias toward low complexity. The domain II stretch occupies residues glutamine 88–lysine 127. The interval leucine 128–serine 345 is domain III, AAA+ region. ATP-binding residues include glycine 173, glycine 175, lysine 176, and threonine 177. The segment at arginine 346 to serine 465 is domain IV, binds dsDNA.

The protein belongs to the DnaA family. Oligomerizes as a right-handed, spiral filament on DNA at oriC.

The protein localises to the cytoplasm. Its function is as follows. Plays an essential role in the initiation and regulation of chromosomal replication. ATP-DnaA binds to the origin of replication (oriC) to initiate formation of the DNA replication initiation complex once per cell cycle. Binds the DnaA box (a 9 base pair repeat at the origin) and separates the double-stranded (ds)DNA. Forms a right-handed helical filament on oriC DNA; dsDNA binds to the exterior of the filament while single-stranded (ss)DNA is stabiized in the filament's interior. The ATP-DnaA-oriC complex binds and stabilizes one strand of the AT-rich DNA unwinding element (DUE), permitting loading of DNA polymerase. After initiation quickly degrades to an ADP-DnaA complex that is not apt for DNA replication. Binds acidic phospholipids. In Acinetobacter baumannii (strain AB307-0294), this protein is Chromosomal replication initiator protein DnaA.